The following is a 311-amino-acid chain: Nuclear hormone receptor family member nhr-111 (311 aa).

The nuclear receptor DNA-binding region spans 39–115; sequence ITLCAVCGDT…KGMNKNAVQP (77 aa). 2 NR C4-type zinc fingers span residues 42–62 and 78–98; these read CAVC…CFGC and CWNG…CKSC. An NR LBD domain is found at 116–311; that stretch reads ERTSHSYTVE…KACEIVISFL (196 aa).

Belongs to the nuclear hormone receptor family.

It is found in the nucleus. Its function is as follows. Orphan nuclear receptor. The protein is Nuclear hormone receptor family member nhr-111 (nhr-111) of Caenorhabditis elegans.